The primary structure comprises 21 residues: Thylakoid lumenal 13.8 kDa protein (21 aa).

It is found in the plastid. Its subcellular location is the chloroplast thylakoid lumen. This Spinacia oleracea (Spinach) protein is Thylakoid lumenal 13.8 kDa protein.